The chain runs to 359 residues: Double-stranded RNA-binding protein 3 (359 aa).

2 consecutive DRBM domains span residues 1–70 and 87–155; these read MYKN…ALSS and IYKN…SLRK. Positions 266–280 are enriched in basic and acidic residues; the sequence is EKKQSLDDPKPEMRI. 2 disordered regions span residues 266–292 and 328–359; these read EKKQSLDDPKPEMRIKTSSPSPLSSSV and APPPKPNPNPNSSPFITRELGNGSQEKKSLPN. The segment covering 328-338 has biased composition (pro residues); sequence APPPKPNPNPN.

Its function is as follows. Binds double-stranded RNA. The chain is Double-stranded RNA-binding protein 3 (DRB3) from Arabidopsis thaliana (Mouse-ear cress).